A 230-amino-acid polypeptide reads, in one-letter code: Claudin-2 (230 aa).

The Cytoplasmic portion of the chain corresponds to 1-7; it reads MASLGVQ. A helical transmembrane segment spans residues 8–28; sequence LVGYILGLLGLLGTSIAMLLP. The Extracellular portion of the chain corresponds to 29-81; the sequence is NWRTSSYVGASIVTAVGFSKGLWMECATHSTGITQCDIYSTLLGLPADIQAAQ. A disulfide bond links C54 and C64. The helical transmembrane segment at 82-102 threads the bilayer; the sequence is AMMVTSSAMSSLACIISVVGM. The Cytoplasmic segment spans residues 103 to 116; the sequence is RCTVFCQDSRAKDR. The helical transmembrane segment at 117-137 threads the bilayer; that stretch reads VAVVGGVFFILGGILGFIPVA. Residues 138-162 are Extracellular-facing; the sequence is WNLHGILRDFYSPLVPDSMKFEIGE. The chain crosses the membrane as a helical span at residues 163–183; sequence ALYLGIISALFSLVAGVILCF. Residues 184–230 are Cytoplasmic-facing; it reads SCSPQGNRTNYYDGYQAQPLATRSSPRSAQQPKAKSEFNSYSLTGYV. The interval 205-230 is disordered; sequence TRSSPRSAQQPKAKSEFNSYSLTGYV. K218 is covalently cross-linked (Glycyl lysine isopeptide (Lys-Gly) (interchain with G-Cter in SUMO)). Phosphoserine occurs at positions 219 and 223. Positions 229 to 230 are interactions with TJP1, TJP2 and TJP3; that stretch reads YV.

It belongs to the claudin family. Can form homo- and heteropolymers with other claudins to mediate paracellular barrier and channel functions of tight junctions in response to physiological stimuli. Homopolymers interact with CLDN3, but not CLDN1, homopolymers. Directly interacts with TJP1/ZO-1, TJP2/ZO-2 and TJP3/ZO-3. Post-translationally, the disulfide bond is necessary for pore formation, but is not required for correct protein trafficking. Expressed in the kidney, liver and intestine, with higher levels in the ileum than in the jejunum. Low levels in the brain. Expressed in colonic epithelium (at protein level). Expressed in the perivenous regions, bile ducts, and gallbladder epithelium (at protein level).

The protein resides in the cell junction. The protein localises to the tight junction. It localises to the cell membrane. The enzyme catalyses Na(+)(in) = Na(+)(out). It carries out the reaction K(+)(in) = K(+)(out). It catalyses the reaction Rb(+)(in) = Rb(+)(out). The catalysed reaction is Li(+)(in) = Li(+)(out). The enzyme catalyses Cs(+)(in) = Cs(+)(out). It carries out the reaction Ca(2+)(in) = Ca(2+)(out). It catalyses the reaction methylamine(out) = methylamine(in). The catalysed reaction is choline(out) = choline(in). The enzyme catalyses H2O(in) = H2O(out). Its activity is regulated as follows. The channel permeability is down-regulated at acidic pH. In terms of biological role, forms paracellular channels: polymerizes in tight junction strands with cation- and water-selective channels through the strands, conveying epithelial permeability in a process known as paracellular tight junction permeability. In intestinal epithelium, allows for sodium and water fluxes from the peritoneal side to the lumen of the intestine to regulate nutrient absorption and clear enteric pathogens as part of mucosal immune response. In kidney, allows passive sodium and calcium reabsorption across proximal tubules from the lumen back to the bloodstream. In the hepatobiliary tract, allows paracellular water and cation fluxes in the hepatic perivenous areas and biliary epithelium to generate bile flow and maintain osmotic gradients. The chain is Claudin-2 from Mus musculus (Mouse).